The following is a 257-amino-acid chain: Hydroxyacylglutathione hydrolase (257 aa).

7 residues coordinate Zn(2+): histidine 54, histidine 56, aspartate 58, histidine 59, histidine 113, aspartate 137, and histidine 175.

It belongs to the metallo-beta-lactamase superfamily. Glyoxalase II family. As to quaternary structure, monomer. Zn(2+) serves as cofactor.

It carries out the reaction an S-(2-hydroxyacyl)glutathione + H2O = a 2-hydroxy carboxylate + glutathione + H(+). It functions in the pathway secondary metabolite metabolism; methylglyoxal degradation; (R)-lactate from methylglyoxal: step 2/2. Thiolesterase that catalyzes the hydrolysis of S-D-lactoyl-glutathione to form glutathione and D-lactic acid. The sequence is that of Hydroxyacylglutathione hydrolase from Nostoc sp. (strain PCC 7120 / SAG 25.82 / UTEX 2576).